A 670-amino-acid chain; its full sequence is FAD-binding monooxygenase ausC (670 aa).

FAD contacts are provided by residues 144–147 (TWYW), 156–157 (DT), and tyrosine 162. 154–156 (MCD) serves as a coordination point for NADP(+). NADP(+)-binding positions include 299-305 (TGASAVQ) and 322-323 (RT).

Belongs to the FAD-binding monooxygenase family. FAD is required as a cofactor.

The enzyme catalyses preaustinoid A + AH2 + O2 = preaustinoid A1 + A + H2O. It participates in secondary metabolite biosynthesis; terpenoid biosynthesis. FAD-binding monooxygenase; part of the gene cluster that mediates the biosynthesis of calidodehydroaustin, a fungal meroterpenoid. The first step of the pathway is the synthesis of 3,5-dimethylorsellinic acid by the polyketide synthase ausA. 3,5-dimethylorsellinic acid is then prenylated by the polyprenyl transferase ausN. Further epoxidation by the FAD-dependent monooxygenase ausM and cyclization by the probable terpene cyclase ausL lead to the formation of protoaustinoid A. Protoaustinoid A is then oxidized to spiro-lactone preaustinoid A3 by the combined action of the FAD-binding monooxygenases ausB and ausC, and the dioxygenase ausE. Acid-catalyzed keto-rearrangement and ring contraction of the tetraketide portion of preaustinoid A3 by ausJ lead to the formation of preaustinoid A4. The aldo-keto reductase ausK, with the help of ausH, is involved in the next step by transforming preaustinoid A4 into isoaustinone which is in turn hydroxylated by the P450 monooxygenase ausI to form austinolide. The cytochrome P450 monooxygenase ausG modifies austinolide to austinol. Austinol is further acetylated to austin by the O-acetyltransferase ausP, which spontaneously changes to dehydroaustin. The cytochrome P450 monooxygenase ausR then converts dehydroaustin is into 7-dehydrodehydroaustin. The hydroxylation catalyzed by ausR permits the O-acetyltransferase ausQ to add an additional acetyl group to the molecule, leading to the formation of acetoxydehydroaustin. The short chain dehydrogenase ausT catalyzes the reduction of the double bond present between carbon atoms 1 and 2 to convert 7-dehydrodehydroaustin into 1,2-dihydro-7-hydroxydehydroaustin. AusQ catalyzes not only an acetylation reaction but also the addition of the PKS ausV diketide product to 1,2-dihydro-7-hydroxydehydroaustin, forming precalidodehydroaustin. Finally, the iron/alpha-ketoglutarate-dependent dioxygenase converts precalidodehydroaustin into calidodehydroaustin. This chain is FAD-binding monooxygenase ausC, found in Aspergillus calidoustus.